Consider the following 161-residue polypeptide: Cyclic pyranopterin monophosphate synthase (161 aa).

Substrate-binding positions include 75 to 77 (LCH) and 113 to 114 (ME). Asp128 is a catalytic residue.

The protein belongs to the MoaC family. As to quaternary structure, homohexamer; trimer of dimers.

It carries out the reaction (8S)-3',8-cyclo-7,8-dihydroguanosine 5'-triphosphate = cyclic pyranopterin phosphate + diphosphate. It participates in cofactor biosynthesis; molybdopterin biosynthesis. In terms of biological role, catalyzes the conversion of (8S)-3',8-cyclo-7,8-dihydroguanosine 5'-triphosphate to cyclic pyranopterin monophosphate (cPMP). The sequence is that of Cyclic pyranopterin monophosphate synthase from Salmonella dublin (strain CT_02021853).